We begin with the raw amino-acid sequence, 475 residues long: Arginine biosynthesis bifunctional protein ArgJ 1, mitochondrial (475 aa).

Substrate contacts are provided by Thr204, Lys233, Thr244, Glu331, Asn470, and Thr475. The Nucleophile role is filled by Thr244.

It belongs to the ArgJ family. As to quaternary structure, heterodimer of an alpha and a beta chain. Post-translationally, the alpha and beta chains are autoproteolytically processed from a single precursor protein within the mitochondrion.

The protein resides in the mitochondrion matrix. It catalyses the reaction N(2)-acetyl-L-ornithine + L-glutamate = N-acetyl-L-glutamate + L-ornithine. The catalysed reaction is L-glutamate + acetyl-CoA = N-acetyl-L-glutamate + CoA + H(+). It functions in the pathway amino-acid biosynthesis; L-arginine biosynthesis; L-ornithine and N-acetyl-L-glutamate from L-glutamate and N(2)-acetyl-L-ornithine (cyclic): step 1/1. It participates in amino-acid biosynthesis; L-arginine biosynthesis; N(2)-acetyl-L-ornithine from L-glutamate: step 1/4. In terms of biological role, catalyzes two activities which are involved in the cyclic version of arginine biosynthesis: the synthesis of acetylglutamate from glutamate and acetyl-CoA, and of ornithine by transacetylation between acetylornithine and glutamate. This Botryotinia fuckeliana (strain B05.10) (Noble rot fungus) protein is Arginine biosynthesis bifunctional protein ArgJ 1, mitochondrial.